Here is a 282-residue protein sequence, read N- to C-terminus: Phosphatidylglycerol--prolipoprotein diacylglyceryl transferase (282 aa).

3 helical membrane passes run 18-38 (LSIKWYGIIIAVGILIGYFIA), 55-75 (VIFYSAIFGFIAARIYFVIFQ), and 89-109 (IWHGGIAIHGGLLGGFITGII). A 1,2-diacyl-sn-glycero-3-phospho-(1'-sn-glycerol) is bound at residue Arg-137. A run of 2 helical transmembrane segments spans residues 203 to 223 (VGETFTLYLIWYSIGRFFVEG) and 235 to 255 (IRVAQLVSVILIIIGLVILIY).

This sequence belongs to the Lgt family.

It localises to the cell membrane. It catalyses the reaction L-cysteinyl-[prolipoprotein] + a 1,2-diacyl-sn-glycero-3-phospho-(1'-sn-glycerol) = an S-1,2-diacyl-sn-glyceryl-L-cysteinyl-[prolipoprotein] + sn-glycerol 1-phosphate + H(+). It participates in protein modification; lipoprotein biosynthesis (diacylglyceryl transfer). Catalyzes the transfer of the diacylglyceryl group from phosphatidylglycerol to the sulfhydryl group of the N-terminal cysteine of a prolipoprotein, the first step in the formation of mature lipoproteins. The polypeptide is Phosphatidylglycerol--prolipoprotein diacylglyceryl transferase (Staphylococcus haemolyticus (strain JCSC1435)).